The sequence spans 387 residues: Xylose isomerase (387 aa).

Catalysis depends on residues H54 and D57. Positions 181, 217, 220, 245, 255, 257, and 287 each coordinate Mg(2+).

It belongs to the xylose isomerase family. Homotetramer. The cofactor is Mg(2+).

The protein localises to the cytoplasm. The enzyme catalyses alpha-D-xylose = alpha-D-xylulofuranose. In Streptomyces coelicolor (strain ATCC BAA-471 / A3(2) / M145), this protein is Xylose isomerase.